The chain runs to 100 residues: Urease subunit gamma (100 aa).

It belongs to the urease gamma subunit family. As to quaternary structure, heterotrimer of UreA (gamma), UreB (beta) and UreC (alpha) subunits. Three heterotrimers associate to form the active enzyme.

The protein resides in the cytoplasm. It carries out the reaction urea + 2 H2O + H(+) = hydrogencarbonate + 2 NH4(+). It participates in nitrogen metabolism; urea degradation; CO(2) and NH(3) from urea (urease route): step 1/1. In Pseudomonas syringae pv. tomato (strain ATCC BAA-871 / DC3000), this protein is Urease subunit gamma.